The sequence spans 346 residues: Phosphoribosylformylglycinamidine cyclo-ligase (346 aa).

It belongs to the AIR synthase family.

Its subcellular location is the cytoplasm. It catalyses the reaction 2-formamido-N(1)-(5-O-phospho-beta-D-ribosyl)acetamidine + ATP = 5-amino-1-(5-phospho-beta-D-ribosyl)imidazole + ADP + phosphate + H(+). It participates in purine metabolism; IMP biosynthesis via de novo pathway; 5-amino-1-(5-phospho-D-ribosyl)imidazole from N(2)-formyl-N(1)-(5-phospho-D-ribosyl)glycinamide: step 2/2. The sequence is that of Phosphoribosylformylglycinamidine cyclo-ligase from Bacillus cereus (strain ZK / E33L).